The chain runs to 395 residues: Flap endonuclease 1 (395 aa).

Residues 1 to 104 (MGIKHLYQII…GELAKRIARK (104 aa)) form an N-domain region. D34 serves as a coordination point for Mg(2+). Residues R47 and R70 each contribute to the DNA site. D86 is a Mg(2+) binding site. The disordered stretch occupies residues 103-123 (RKQEAAEQHEEAKETGTTEDV). An I-domain region spans residues 122–253 (DVEKFSRRTV…NTALKLIRDH (132 aa)). Residues E158, E160, D179, and D181 each coordinate Mg(2+). E158 serves as a coordination point for DNA. DNA-binding residues include G231 and D233. Position 233 (D233) interacts with Mg(2+). Residues 341–349 (QQSRLEGFF) are interaction with PCNA. A compositionally biased stretch (basic and acidic residues) spans 356–389 (DEEKASLKRKHEEKLEAAKKKKKEDAKAKREAKS). Residues 356–395 (DEEKASLKRKHEEKLEAAKKKKKEDAKAKREAKSRPKGTA) form a disordered region.

It belongs to the XPG/RAD2 endonuclease family. FEN1 subfamily. Interacts with PCNA. Three molecules of FEN1 bind to one PCNA trimer with each molecule binding to one PCNA monomer. PCNA stimulates the nuclease activity without altering cleavage specificity. Requires Mg(2+) as cofactor. In terms of processing, phosphorylated. Phosphorylation upon DNA damage induces relocalization to the nuclear plasma.

It localises to the nucleus. It is found in the nucleolus. The protein localises to the nucleoplasm. Its subcellular location is the mitochondrion. Structure-specific nuclease with 5'-flap endonuclease and 5'-3' exonuclease activities involved in DNA replication and repair. During DNA replication, cleaves the 5'-overhanging flap structure that is generated by displacement synthesis when DNA polymerase encounters the 5'-end of a downstream Okazaki fragment. It enters the flap from the 5'-end and then tracks to cleave the flap base, leaving a nick for ligation. Also involved in the long patch base excision repair (LP-BER) pathway, by cleaving within the apurinic/apyrimidinic (AP) site-terminated flap. Acts as a genome stabilization factor that prevents flaps from equilibrating into structures that lead to duplications and deletions. Also possesses 5'-3' exonuclease activity on nicked or gapped double-stranded DNA, and exhibits RNase H activity. Also involved in replication and repair of rDNA and in repairing mitochondrial DNA. The chain is Flap endonuclease 1 from Uncinocarpus reesii (strain UAMH 1704).